A 516-amino-acid polypeptide reads, in one-letter code: Golgin-84 (516 aa).

The Cytoplasmic portion of the chain corresponds to M1–R492. Residues Q28–V80 are disordered. Residues S42–V80 are compositionally biased toward low complexity. Residues S64 and S74 each carry the phosphoserine modification. Residues T108–M423 adopt a coiled-coil conformation. The chain crosses the membrane as a helical; Anchor for type IV membrane protein span at residues V493 to T513. Over T514 to N516 the chain is Lumenal.

It localises to the golgi apparatus membrane. May be involved in maintaining Golgi structure and in intra-Golgi transport. The chain is Golgin-84 (Golgin84) from Drosophila melanogaster (Fruit fly).